Reading from the N-terminus, the 587-residue chain is Trans-activating transcriptional regulatory protein (587 aa).

This sequence belongs to the nucleopolyhedrovirus IE-1 protein family.

Regulatory transcriptional protein, which trans-activates gene expression from early baculovirus promoters. Can also trans-activate its own promoter, suggesting that it is autoregulated during normal infection of insect cells. This chain is Trans-activating transcriptional regulatory protein (IE1), found in Bombyx mori nuclear polyhedrosis virus (BmNPV).